A 168-amino-acid chain; its full sequence is Large ribosomal subunit protein uL10 (168 aa).

This sequence belongs to the universal ribosomal protein uL10 family. As to quaternary structure, part of the ribosomal stalk of the 50S ribosomal subunit. The N-terminus interacts with L11 and the large rRNA to form the base of the stalk. The C-terminus forms an elongated spine to which L12 dimers bind in a sequential fashion forming a multimeric L10(L12)X complex.

Its function is as follows. Forms part of the ribosomal stalk, playing a central role in the interaction of the ribosome with GTP-bound translation factors. The chain is Large ribosomal subunit protein uL10 from Acinetobacter baumannii (strain AB307-0294).